A 174-amino-acid polypeptide reads, in one-letter code: Phosphopantetheine adenylyltransferase (174 aa).

Thr-10 is a substrate binding site. ATP is bound by residues Thr-10–Phe-11 and His-18. Positions 44, 76, and 90 each coordinate substrate. Residues Gly-91 to Arg-93, Glu-101, and His-126 to Ser-132 each bind ATP.

This sequence belongs to the bacterial CoaD family. Homohexamer. Mg(2+) is required as a cofactor.

It localises to the cytoplasm. It carries out the reaction (R)-4'-phosphopantetheine + ATP + H(+) = 3'-dephospho-CoA + diphosphate. The protein operates within cofactor biosynthesis; coenzyme A biosynthesis; CoA from (R)-pantothenate: step 4/5. Functionally, reversibly transfers an adenylyl group from ATP to 4'-phosphopantetheine, yielding dephospho-CoA (dPCoA) and pyrophosphate. This chain is Phosphopantetheine adenylyltransferase, found in Alkalilimnicola ehrlichii (strain ATCC BAA-1101 / DSM 17681 / MLHE-1).